The sequence spans 205 residues: MDKLLIAADNALRTLFARPRAAQPSPARGLPEGDLSPAQRREAGALMRVNHVGEVCAQALYMGQAAVTRDPALRARLMEAAREETDHLAWTAERLQALGSRPSLLNPLWFAGAFAIGWTAAQVSDAASLGFVVETENQVARHLQGHLERMPPQDAASLAVIERMQADEQRHADDARAAGASDLPAPARVLMAAAARVMTATAHHI.

Positions 54, 84, 87, 136, 168, and 171 each coordinate Fe cation.

The protein belongs to the COQ7 family. It depends on Fe cation as a cofactor.

The protein resides in the cell membrane. It catalyses the reaction a 5-methoxy-2-methyl-3-(all-trans-polyprenyl)benzene-1,4-diol + AH2 + O2 = a 3-demethylubiquinol + A + H2O. The protein operates within cofactor biosynthesis; ubiquinone biosynthesis. Functionally, catalyzes the hydroxylation of 2-nonaprenyl-3-methyl-6-methoxy-1,4-benzoquinol during ubiquinone biosynthesis. This Paracidovorax citrulli (strain AAC00-1) (Acidovorax citrulli) protein is 3-demethoxyubiquinol 3-hydroxylase.